A 393-amino-acid chain; its full sequence is Chorismate synthase (393 aa).

Residues R40 and R46 each contribute to the NADP(+) site. FMN-binding positions include R129 to S131, Q249 to A250, G301, K316 to T320, and R342.

Belongs to the chorismate synthase family. In terms of assembly, homotetramer. FMNH2 serves as cofactor.

It carries out the reaction 5-O-(1-carboxyvinyl)-3-phosphoshikimate = chorismate + phosphate. Its pathway is metabolic intermediate biosynthesis; chorismate biosynthesis; chorismate from D-erythrose 4-phosphate and phosphoenolpyruvate: step 7/7. In terms of biological role, catalyzes the anti-1,4-elimination of the C-3 phosphate and the C-6 proR hydrogen from 5-enolpyruvylshikimate-3-phosphate (EPSP) to yield chorismate, which is the branch point compound that serves as the starting substrate for the three terminal pathways of aromatic amino acid biosynthesis. This reaction introduces a second double bond into the aromatic ring system. The chain is Chorismate synthase from Pelobacter propionicus (strain DSM 2379 / NBRC 103807 / OttBd1).